The chain runs to 206 residues: MVHYKVSYFPIRGAGEIARQILAYAGQDFEDNRIPKEEWPAVKPSTPFGQLPLLEVDGKVLAQSHAIARYLARQFGINGKCAWEEAQVNSVADQFKDYLNEVRPYFMVKMGFAEGDLDALAKDVFLPGFKKHYGFFANFLKSAGSGYLVGDSLTFVDLLVAQHTADLLAANAALLDEFPQFKAHQEKVHSNANIKKWLETRPVTPF.

The 78-residue stretch at 2–79 (VHYKVSYFPI…YLARQFGING (78 aa)) folds into the GST N-terminal domain. Glutathione is bound by residues Tyr8, Trp39, Lys43, 49-51 (GQL), and 63-64 (QS). The 126-residue stretch at 81 to 206 (CAWEEAQVNS…WLETRPVTPF (126 aa)) folds into the GST C-terminal domain.

It belongs to the GST superfamily. Sigma family.

The catalysed reaction is RX + glutathione = an S-substituted glutathione + a halide anion + H(+). Conjugation of reduced glutathione to a wide number of exogenous and endogenous hydrophobic electrophiles. May play a role in the detoxification of reactive oxygen species produced during pathogenic bacterial infection. This is Probable glutathione S-transferase 7 (gst-7) from Caenorhabditis elegans.